Reading from the N-terminus, the 488-residue chain is Membrane-bound lytic murein transglycosylase F (488 aa).

The N-terminal stretch at 1–25 (MFARPAIRMRCATGLLAIGTLLMLA) is a signal peptide. The non-LT domain stretch occupies residues 26–269 (GCGEEPKPSV…RLKERYYGHV (244 aa)). The interval 270–488 (DVLGYVGAYT…RTLDEQTPPL (219 aa)) is LT domain. E316 is a catalytic residue.

The protein in the N-terminal section; belongs to the bacterial solute-binding protein 3 family. In the C-terminal section; belongs to the transglycosylase Slt family.

Its subcellular location is the cell outer membrane. It catalyses the reaction Exolytic cleavage of the (1-&gt;4)-beta-glycosidic linkage between N-acetylmuramic acid (MurNAc) and N-acetylglucosamine (GlcNAc) residues in peptidoglycan, from either the reducing or the non-reducing ends of the peptidoglycan chains, with concomitant formation of a 1,6-anhydrobond in the MurNAc residue.. Functionally, murein-degrading enzyme that degrades murein glycan strands and insoluble, high-molecular weight murein sacculi, with the concomitant formation of a 1,6-anhydromuramoyl product. Lytic transglycosylases (LTs) play an integral role in the metabolism of the peptidoglycan (PG) sacculus. Their lytic action creates space within the PG sacculus to allow for its expansion as well as for the insertion of various structures such as secretion systems and flagella. This is Membrane-bound lytic murein transglycosylase F from Ectopseudomonas mendocina (strain ymp) (Pseudomonas mendocina).